Consider the following 180-residue polypeptide: ATP synthase subunit b (180 aa).

A helical transmembrane segment spans residues 15–35 (LIPEVPELVIGLLAFAIVFFV).

This sequence belongs to the ATPase B chain family. F-type ATPases have 2 components, F(1) - the catalytic core - and F(0) - the membrane proton channel. F(1) has five subunits: alpha(3), beta(3), gamma(1), delta(1), epsilon(1). F(0) has three main subunits: a(1), b(2) and c(10-14). The alpha and beta chains form an alternating ring which encloses part of the gamma chain. F(1) is attached to F(0) by a central stalk formed by the gamma and epsilon chains, while a peripheral stalk is formed by the delta and b chains.

It is found in the cell membrane. F(1)F(0) ATP synthase produces ATP from ADP in the presence of a proton or sodium gradient. F-type ATPases consist of two structural domains, F(1) containing the extramembraneous catalytic core and F(0) containing the membrane proton channel, linked together by a central stalk and a peripheral stalk. During catalysis, ATP synthesis in the catalytic domain of F(1) is coupled via a rotary mechanism of the central stalk subunits to proton translocation. Functionally, component of the F(0) channel, it forms part of the peripheral stalk, linking F(1) to F(0). This chain is ATP synthase subunit b, found in Streptomyces avermitilis (strain ATCC 31267 / DSM 46492 / JCM 5070 / NBRC 14893 / NCIMB 12804 / NRRL 8165 / MA-4680).